A 179-amino-acid chain; its full sequence is Putative DUP240 protein DFP1 (179 aa).

2 helical membrane passes run 4–24 and 26–46; these read FLLF…SGVL and PAMV…IWSF.

It belongs to the DUP/COS family.

The protein localises to the membrane. This Saccharomyces cerevisiae (strain ATCC 204508 / S288c) (Baker's yeast) protein is Putative DUP240 protein DFP1.